A 464-amino-acid chain; its full sequence is Sensor protein IrlS (464 aa).

The Periplasmic portion of the chain corresponds to 1–13; that stretch reads MIRRLLPRTLRAR. The chain crosses the membrane as a helical span at residues 14 to 34; that stretch reads LTALIILSTAATLALSGVALY. At 35-166 the chain is on the cytoplasmic side; it reads SALHNRLVGM…DHALLRAYAY (132 aa). Residues 167–187 traverse the membrane as a helical segment; it reads TVVVIEVLAVVLTAALAYGIA. Residues 188–241 form the HAMP domain; it reads MLGLSPLRRLVARAEQMSSSRLAQPLPELDTSGELKEMEHAFNAMLKRLDESFV. The Periplasmic segment spans residues 188 to 464; the sequence is MLGLSPLRRL…FWLKFPAHAA (277 aa). The region spanning 249–463 is the Histidine kinase domain; sequence NLAHDMRTPL…TFWLKFPAHA (215 aa). Position 252 is a phosphohistidine; by autocatalysis (His252).

It localises to the cell inner membrane. It carries out the reaction ATP + protein L-histidine = ADP + protein N-phospho-L-histidine.. In terms of biological role, member of the two-component regulatory system IrlR/IrlS. May be involved in invasion of eukaryotic cells and heavy-metal resistance. Probably activates IrlR by phosphorylation. This is Sensor protein IrlS (irlS) from Burkholderia pseudomallei (strain K96243).